Here is a 378-residue protein sequence, read N- to C-terminus: Erythronate-4-phosphate dehydrogenase (378 aa).

The substrate site is built by Ser-45 and Thr-66. NAD(+) contacts are provided by Asp-146 and Thr-175. Arg-208 is an active-site residue. Asp-232 contributes to the NAD(+) binding site. The active site involves Glu-237. Catalysis depends on His-254, which acts as the Proton donor. Gly-257 contacts NAD(+). Substrate is bound at residue Tyr-258.

The protein belongs to the D-isomer specific 2-hydroxyacid dehydrogenase family. PdxB subfamily. As to quaternary structure, homodimer.

The protein resides in the cytoplasm. The catalysed reaction is 4-phospho-D-erythronate + NAD(+) = (R)-3-hydroxy-2-oxo-4-phosphooxybutanoate + NADH + H(+). The protein operates within cofactor biosynthesis; pyridoxine 5'-phosphate biosynthesis; pyridoxine 5'-phosphate from D-erythrose 4-phosphate: step 2/5. In terms of biological role, catalyzes the oxidation of erythronate-4-phosphate to 3-hydroxy-2-oxo-4-phosphonooxybutanoate. The chain is Erythronate-4-phosphate dehydrogenase from Escherichia fergusonii (strain ATCC 35469 / DSM 13698 / CCUG 18766 / IAM 14443 / JCM 21226 / LMG 7866 / NBRC 102419 / NCTC 12128 / CDC 0568-73).